Consider the following 392-residue polypeptide: Alanine racemase 2 (392 aa).

Lysine 40 (proton acceptor; specific for D-alanine) is an active-site residue. Lysine 40 is subject to N6-(pyridoxal phosphate)lysine. Arginine 138 contacts substrate. Residue tyrosine 266 is the Proton acceptor; specific for L-alanine of the active site. Methionine 314 serves as a coordination point for substrate.

Belongs to the alanine racemase family. Pyridoxal 5'-phosphate serves as cofactor.

The enzyme catalyses L-alanine = D-alanine. It functions in the pathway amino-acid biosynthesis; D-alanine biosynthesis; D-alanine from L-alanine: step 1/1. Its function is as follows. Catalyzes the interconversion of L-alanine and D-alanine. May also act on other amino acids. This Oceanobacillus iheyensis (strain DSM 14371 / CIP 107618 / JCM 11309 / KCTC 3954 / HTE831) protein is Alanine racemase 2 (alr2).